The following is a 273-amino-acid chain: MLKQAVEHRGGFSFENCQRNASLEHVLPGLRVPLARKTGTTIAGLVFRDGVILGADTRATNDSVVADKSCEKIHFIAPKIYCCGAGVAADTEMTTRMAASKMELHALSTGREPRVATVTRILRQTLFRYQGHVGASLIVGGVDLNGPQLYSVHPHGSYSRLPFTALGSGQDAAVALLEDRFQPNMTLEAAQELLVEAITAGILGDLGSGGSVDACVITAGGAKLQRALSSPIEPVQRAGQYRFAPGTTPVQTQEVRALTLELLEETVQAMEVE.

Methionine 1 carries the post-translational modification N-acetylmethionine. Residues 1–39 constitute a propeptide, removed in mature form; it reads MLKQAVEHRGGFSFENCQRNASLEHVLPGLRVPLARKTG. Threonine 40 (nucleophile) is an active-site residue. A Phosphoserine modification is found at serine 230.

It belongs to the peptidase T1B family. As to quaternary structure, the 26S proteasome consists of a 20S proteasome core and two 19S regulatory subunits. The 20S proteasome core is composed of 28 subunits that are arranged in four stacked rings, resulting in a barrel-shaped structure. The two end rings are each formed by seven alpha subunits, and the two central rings are each formed by seven beta subunits. The catalytic chamber with the active sites is on the inside of the barrel. Component of the immunoproteasome, where it displaces the equivalent housekeeping subunit PSMB7. Component of the spermatoproteasome, a form of the proteasome specifically found in testis. In terms of processing, autocleaved. The resulting N-terminal Thr residue of the mature subunit is responsible for the nucleophile proteolytic activity.

Its subcellular location is the cytoplasm. It is found in the nucleus. The enzyme catalyses Cleavage of peptide bonds with very broad specificity.. Its function is as follows. The proteasome is a multicatalytic proteinase complex which is characterized by its ability to cleave peptides with Arg, Phe, Tyr, Leu, and Glu adjacent to the leaving group at neutral or slightly basic pH. The proteasome has an ATP-dependent proteolytic activity. This subunit is involved in antigen processing to generate class I binding peptides. The sequence is that of Proteasome subunit beta type-10 (Psmb10) from Rattus norvegicus (Rat).